We begin with the raw amino-acid sequence, 552 residues long: Solute carrier family 22 member 6-B (552 aa).

The Cytoplasmic portion of the chain corresponds to 1–16 (MAFQEILESLGGMGRY). Residues 17-37 (QVIHVVLLSLPVFMLASHNLM) form a helical membrane-spanning segment. Over 38-137 (QNFTAATPSH…LVCNHRRMRQ (100 aa)) the chain is Extracellular. A helical membrane pass occupies residues 138–158 (VAQSIYMAGVLVGSILFGGLS). Residues 159–164 (DKFGRR) lie on the Cytoplasmic side of the membrane. The chain crosses the membrane as a helical span at residues 165-184 (PLNIWSNLQMFVTGICAAFS). Position 185 (P185) is a topological domain, extracellular. A helical transmembrane segment spans residues 186 to 206 (NYIWYCIFRFLTGVAFSGIVL). Residues 207-225 (NSYSLTVEWIPTGNRAFTS) are Cytoplasmic-facing. Residues 226 to 246 (TATGYCYTMGQLVLVGLAFII) traverse the membrane as a helical segment. At 247-250 (RDWQ) the chain is on the extracellular side. The chain crosses the membrane as a helical span at residues 251–271 (WLQLAASIPFFFYFLYSWWIP). Residues 272–336 (ESGRWLVLSG…YSALDLVRTP (65 aa)) are Cytoplasmic-facing. A helical membrane pass occupies residues 337 to 356 (VVRRISFCISCTWFSTSFAY). Position 357 (Y357) is a topological domain, extracellular. The chain crosses the membrane as a helical span at residues 358–378 (GLALDLQSFGVSIYIIQIIFG). At 379-398 (TVDIPAKFISYFITTYVGRR) the chain is on the cytoplasmic side. A helical membrane pass occupies residues 399–419 (VSQAITLILAGIAILVNISVP). Residues 420 to 426 (QDFQTVR) are Extracellular-facing. A helical membrane pass occupies residues 427-447 (TAMAVFGKGCLAASFNCLYLY). At 448 to 459 (TGELYPTVIRQT) the chain is on the cytoplasmic side. A helical membrane pass occupies residues 460-480 (GMGLGAMMARLGGIIAPLAQM). Topologically, residues 481–487 (TGDIYHS) are extracellular. The helical transmembrane segment at 488–508 (LPLIIFGCLPILSGIAGCFLP) threads the bilayer. Topologically, residues 509 to 552 (ETLGVPLPETIEEVESPDKQQKDVNVSAKIPLKETELYNMKTDV) are cytoplasmic.

The protein belongs to the major facilitator (TC 2.A.1) superfamily. Organic cation transporter (TC 2.A.1.19) family. Post-translationally, glycosylated. Glycosylation is necessary for proper targeting of the transporter to the plasma membrane.

The protein localises to the cell membrane. It localises to the basolateral cell membrane. The protein resides in the basal cell membrane. In terms of biological role, involved in the renal elimination of endogenous and exogenous organic anions. Mediates the sodium-independent uptake of p-aminohippurate (PAH), cidofovir, adefovir, 9-(2-phosphonylmethoxyethyl) guanine (PMEG), 9-(2-phosphonylmethoxyethyl) diaminopurine (PMEDAP) and edaravone sulfate. PAH uptake is inhibited by furosemide, steviol, phorbol 12-myristate 13-acetate (PMA), calcium ionophore A23187, benzylpenicillin, furosemide, indomethacin, bumetamide, losartan, probenecid, phenol red, urate, and alpha-ketoglutarate. In Xenopus laevis (African clawed frog), this protein is Solute carrier family 22 member 6-B (slc22a6-b).